Here is a 324-residue protein sequence, read N- to C-terminus: Olfactory receptor 5A2 (324 aa).

The Extracellular portion of the chain corresponds to 1-26 (MAVGRNNTIVTKFILLGLSDHPQMKI). N6 carries an N-linked (GlcNAc...) asparagine glycan. A helical membrane pass occupies residues 27 to 47 (FLFMLFLGLYLLTLAWNLSLI). At 48-55 (ALIKMDSH) the chain is on the cytoplasmic side. Residues 56–76 (LHMPMYFFLSNLSFLDICYVS) traverse the membrane as a helical segment. Topologically, residues 77–100 (STAPKMLSDIITEQKTISFVGCAT) are extracellular. C98 and C190 are oxidised to a cystine. The helical transmembrane segment at 101–121 (QYFVFCGMGLTECFLLAAMAY) threads the bilayer. At 122 to 134 (DRYAAICNPLLYT) the chain is on the cytoplasmic side. Residues 135–155 (VLISHTLCLKMVVGAYVGGFL) traverse the membrane as a helical segment. Over 156–197 (SSFIETYSVYQHDFCGPYMINHFFCDLPPVLALSCSDTFTSE) the chain is Extracellular. A helical membrane pass occupies residues 198 to 218 (VVTFIVSVVVGIVSVLVVLIS). The Cytoplasmic segment spans residues 219–238 (YGYIVAAVVKISSATGRTKA). The chain crosses the membrane as a helical span at residues 239 to 259 (FSTCASHLTAVTLFYGSGFFM). The Extracellular portion of the chain corresponds to 260–272 (YMRPSSSYSLNRD). A helical transmembrane segment spans residues 273-293 (KVVSIFYALVIPVVNPIIYSF). At 294–324 (RNKEIKNAMRKAMERDPGISHGGPFIFMTLG) the chain is on the cytoplasmic side.

This sequence belongs to the G-protein coupled receptor 1 family.

Its subcellular location is the cell membrane. Odorant receptor. The protein is Olfactory receptor 5A2 (OR5A2) of Homo sapiens (Human).